A 1033-amino-acid polypeptide reads, in one-letter code: SIT4-associating protein SAP190 (1033 aa).

Disordered regions lie at residues 32–82, 147–213, and 768–1033; these read DQDD…TTES, PEII…QVET, and FGND…KEAF. Residues 158 to 170 are compositionally biased toward basic and acidic residues; it reads ILIERDRKDKKED. Positions 171 to 182 are enriched in acidic residues; it reads AEEGGDSEETTN. The span at 183-195 shows a compositional bias: basic and acidic residues; it reads DSDHDSGDERSVD. Serine 774 carries the post-translational modification Phosphoserine. 2 stretches are compositionally biased toward acidic residues: residues 784-793 and 825-838; these read SEDIIGDTEG and ENEE…EYSD. Phosphoserine is present on residues serine 857, serine 862, and serine 892. Positions 858-879 are enriched in basic and acidic residues; sequence DDGKSKSAESEFTDKISEHRDG. Residues 909 to 924 are compositionally biased toward polar residues; the sequence is SRSQPSDPKLQDQNIF. Residues 932-944 show a composition bias toward acidic residues; that stretch reads GVGDDDDYMDPND. Threonine 990 is subject to Phosphothreonine. Serine 991 is modified (phosphoserine). The span at 1000–1018 shows a compositional bias: acidic residues; that stretch reads ISSDEEDSEDEDEENDMGN.

The protein belongs to the SAPS family. In terms of assembly, associates with the SIT4 protein phosphatase catalytic subunit in a cell-cycle-dependent manner. Post-translationally, hyperphosphorylated in the absence of SIT4.

Its subcellular location is the cytoplasm. In terms of biological role, positive regulator of protein phosphatase SIT4. Involved in the general amino acid control (GAAC) response regulated by TOR. Involved in the dephosphorylation of the elongator complex subunit IKI3. This Saccharomyces cerevisiae (strain ATCC 204508 / S288c) (Baker's yeast) protein is SIT4-associating protein SAP190 (SAP190).